A 485-amino-acid polypeptide reads, in one-letter code: Forkhead box protein N3 (485 aa).

Disordered regions lie at residues 1-54 (MGPV…KGGM) and 85-108 (PVQD…DAKQ). A compositionally biased stretch (polar residues) spans 16-30 (ISVSSQCYRSSTLSN). A DNA-binding region (fork-head) is located at residues 113–209 (KPPYSFSCLI…QALKKTPYHP (97 aa)). Disordered regions lie at residues 316-357 (MESE…ISSS) and 401-449 (PLVE…MKEA). Low complexity predominate over residues 338–357 (SSAKSANKRSSSPSDSISSS). Residues 410–422 (QHKKKQHLLKLRR) are compositionally biased toward basic residues.

In terms of tissue distribution, at early cleavage stages, localized within the animal half of the embryo. At gastrulation, expression expands over the whole embryo excluding the future endodermal cells of the blastopore. During neurulation, expressed in the prospective eye field and in the neural crest cells. Strongly enriched in the eye vesicles at stage 26. From stage 29 onwards, expressed predominantly in the eye, the branchial arches and the vagal ganglion. At stage 38, expressed throughout the head with strongest expression in the head mesenchyme and the eye lens.

Its subcellular location is the nucleus. Functionally, acts as a transcriptional repressor. May be involved in DNA damage-inducible cell cycle arrests (checkpoints). The chain is Forkhead box protein N3 from Xenopus laevis (African clawed frog).